Consider the following 200-residue polypeptide: uncharacterized protein (200 aa).

This is an uncharacterized protein from Amazona oratrix (yellow-headed parrot).